We begin with the raw amino-acid sequence, 101 residues long: Large ribosomal subunit protein bL21 (101 aa).

Belongs to the bacterial ribosomal protein bL21 family. Part of the 50S ribosomal subunit. Contacts protein L20.

Functionally, this protein binds to 23S rRNA in the presence of protein L20. The polypeptide is Large ribosomal subunit protein bL21 (Corynebacterium efficiens (strain DSM 44549 / YS-314 / AJ 12310 / JCM 11189 / NBRC 100395)).